The chain runs to 579 residues: Golvesin (579 aa).

The required for targeting to the plasma membrane stretch occupies residues 1-75; the sequence is MTSVNEHSLL…NNNNNNNNNN (75 aa). Positions 1-79 are disordered; it reads MTSVNEHSLL…NNNNNNSNTG (79 aa). At 1 to 94 the chain is on the lumenal side; it reads MTSVNEHSLL…KKKKWNFRKK (94 aa). Over residues 11 to 77 the composition is skewed to low complexity; it reads INNNENNDNN…NNNNNNNNSN (67 aa). Residues 95–115 form a helical; Signal-anchor for type III membrane protein membrane-spanning segment; that stretch reads ILPMIVILIITAIVVCLVVFS. Positions 95-118 are required for membrane targeting; that stretch reads ILPMIVILIITAIVVCLVVFSLPF. Residues 116–578 are Cytoplasmic-facing; it reads LPFDSSNTIY…SNDFVIAESP (463 aa). The interval 559–579 is required for transfer to endosomes and contractile vacuoles; the protein is trapped in the Golgi; sequence WPSSKGIPGFSNDFVIAESPE.

Its subcellular location is the contractile vacuole membrane. It is found in the endosome membrane. The protein localises to the golgi apparatus membrane. This is Golvesin (gol) from Dictyostelium discoideum (Social amoeba).